Consider the following 472-residue polypeptide: Levansucrase (472 aa).

A signal peptide spans 1-29 (MNIKKIVKQATVLTFTTALLAGGATQAFA). Residues Trp85, Asp86, and Ser164 each contribute to the sucrose site. The active-site Nucleophile is the Asp86. Asp241 lines the Ca(2+) pocket. 2 residues coordinate sucrose: Arg246 and Asp247. Ca(2+) is bound by residues Gln272, Leu308, Asn310, and Asp339. Glu340 contacts sucrose. Residue Glu342 is the Proton donor/acceptor of the active site. Arg360 is a binding site for sucrose.

The protein belongs to the glycosyl hydrolase 68 family.

The protein resides in the secreted. The enzyme catalyses [6)-beta-D-fructofuranosyl-(2-&gt;](n) alpha-D-glucopyranoside + sucrose = [6)-beta-D-fructofuranosyl-(2-&gt;](n+1) alpha-D-glucopyranoside + D-glucose. Its activity is regulated as follows. Ca(2+) may play an important structural role and promote stability of levansucrase. Catalyzes the synthesis of levan, a fructose polymer, by transferring the fructosyl moiety from sucrose to a growing acceptor molecule. Also displays sucrose hydrolase activity. In Bacillus amyloliquefaciens (Bacillus velezensis), this protein is Levansucrase.